A 593-amino-acid chain; its full sequence is NADH-quinone oxidoreductase subunit C/D (593 aa).

The tract at residues 1 to 184 (MTADNAIFIP…DPYSLTLAKQ (184 aa)) is NADH dehydrogenase I subunit C. The tract at residues 208-593 (DYMFLNLGPN…IDFVMADVDR (386 aa)) is NADH dehydrogenase I subunit D.

This sequence in the N-terminal section; belongs to the complex I 30 kDa subunit family. It in the C-terminal section; belongs to the complex I 49 kDa subunit family. In terms of assembly, NDH-1 is composed of 13 different subunits. Subunits NuoB, CD, E, F, and G constitute the peripheral sector of the complex.

Its subcellular location is the cell inner membrane. It carries out the reaction a quinone + NADH + 5 H(+)(in) = a quinol + NAD(+) + 4 H(+)(out). NDH-1 shuttles electrons from NADH, via FMN and iron-sulfur (Fe-S) centers, to quinones in the respiratory chain. The immediate electron acceptor for the enzyme in this species is believed to be ubiquinone. Couples the redox reaction to proton translocation (for every two electrons transferred, four hydrogen ions are translocated across the cytoplasmic membrane), and thus conserves the redox energy in a proton gradient. The chain is NADH-quinone oxidoreductase subunit C/D from Pseudomonas putida (strain W619).